We begin with the raw amino-acid sequence, 241 residues long: 2-C-methyl-D-erythritol 4-phosphate cytidylyltransferase (241 aa).

It belongs to the IspD/TarI cytidylyltransferase family. IspD subfamily.

The enzyme catalyses 2-C-methyl-D-erythritol 4-phosphate + CTP + H(+) = 4-CDP-2-C-methyl-D-erythritol + diphosphate. It participates in isoprenoid biosynthesis; isopentenyl diphosphate biosynthesis via DXP pathway; isopentenyl diphosphate from 1-deoxy-D-xylulose 5-phosphate: step 2/6. Its function is as follows. Catalyzes the formation of 4-diphosphocytidyl-2-C-methyl-D-erythritol from CTP and 2-C-methyl-D-erythritol 4-phosphate (MEP). This Pseudoalteromonas translucida (strain TAC 125) protein is 2-C-methyl-D-erythritol 4-phosphate cytidylyltransferase.